We begin with the raw amino-acid sequence, 490 residues long: Protein dead ringer homolog (490 aa).

Residues 1–33 show a composition bias toward basic and acidic residues; the sequence is MVEDQRRQLMEEEDEERRLILEEQRRRMMRADR. Disordered regions lie at residues 1-77 and 106-135; these read MVED…AHID and ITQS…HGGS. Residues 34–50 are compositionally biased toward acidic residues; that stretch reads DEEEEEEEEEEEEEREE. Residues 51-76 are compositionally biased toward basic and acidic residues; that stretch reads DDGRRSEDEMREDEPPGRRETSHAHI. The segment covering 106 to 117 has biased composition (polar residues); that stretch reads ITQSPPLTNGSN. The region spanning 202–294 is the ARID domain; sequence DSKRKEFLDD…YLYPYECEKK (93 aa). Positions 298–369 are disordered; the sequence is SPSELQSAID…PPRLSPSTSP (72 aa). Residues 316-325 show a composition bias toward basic residues; that stretch reads PSYHSPHMHP. The REKLES domain maps to 389–479; that stretch reads AAMLAELAER…GVLYPRGGTR (91 aa).

The protein localises to the nucleus. Functionally, transcription factor involved in skeletogenesis and oral ectoderm patterning. The chain is Protein dead ringer homolog (dri) from Strongylocentrotus purpuratus (Purple sea urchin).